The sequence spans 271 residues: Formamidopyrimidine-DNA glycosylase (271 aa).

Pro2 functions as the Schiff-base intermediate with DNA in the catalytic mechanism. The active-site Proton donor is Glu3. The active-site Proton donor; for beta-elimination activity is Lys58. Residues His92, Arg111, and Arg152 each coordinate DNA. Residues 237–271 (YVYGKVQKPCRICNNIITLIRQNGRSTYFCNACQN) form an FPG-type zinc finger. Arg261 (proton donor; for delta-elimination activity) is an active-site residue.

It belongs to the FPG family. Monomer. Zn(2+) is required as a cofactor.

The catalysed reaction is Hydrolysis of DNA containing ring-opened 7-methylguanine residues, releasing 2,6-diamino-4-hydroxy-5-(N-methyl)formamidopyrimidine.. The enzyme catalyses 2'-deoxyribonucleotide-(2'-deoxyribose 5'-phosphate)-2'-deoxyribonucleotide-DNA = a 3'-end 2'-deoxyribonucleotide-(2,3-dehydro-2,3-deoxyribose 5'-phosphate)-DNA + a 5'-end 5'-phospho-2'-deoxyribonucleoside-DNA + H(+). Involved in base excision repair of DNA damaged by oxidation or by mutagenic agents. Acts as a DNA glycosylase that recognizes and removes damaged bases. Has a preference for oxidized purines, such as 7,8-dihydro-8-oxoguanine (8-oxoG). Has AP (apurinic/apyrimidinic) lyase activity and introduces nicks in the DNA strand. Cleaves the DNA backbone by beta-delta elimination to generate a single-strand break at the site of the removed base with both 3'- and 5'-phosphates. This is Formamidopyrimidine-DNA glycosylase from Wolbachia pipientis subsp. Culex pipiens (strain wPip).